Reading from the N-terminus, the 168-residue chain is Photosystem I assembly protein Ycf3 (168 aa).

3 TPR repeats span residues 35-68 (AFTY…EIDP), 72-105 (SYIL…NPFL), and 120-153 (GEQA…TPGN).

It belongs to the Ycf3 family.

It localises to the plastid. The protein resides in the chloroplast thylakoid membrane. In terms of biological role, essential for the assembly of the photosystem I (PSI) complex. May act as a chaperone-like factor to guide the assembly of the PSI subunits. This is Photosystem I assembly protein Ycf3 from Ipomoea purpurea (Common morning glory).